We begin with the raw amino-acid sequence, 166 residues long: Crossover junction endodeoxyribonuclease RuvC (166 aa).

Active-site residues include D7, E67, and D140. Mg(2+) contacts are provided by D7, E67, and D140.

This sequence belongs to the RuvC family. As to quaternary structure, homodimer which binds Holliday junction (HJ) DNA. The HJ becomes 2-fold symmetrical on binding to RuvC with unstacked arms; it has a different conformation from HJ DNA in complex with RuvA. In the full resolvosome a probable DNA-RuvA(4)-RuvB(12)-RuvC(2) complex forms which resolves the HJ. The cofactor is Mg(2+).

The protein localises to the cytoplasm. It catalyses the reaction Endonucleolytic cleavage at a junction such as a reciprocal single-stranded crossover between two homologous DNA duplexes (Holliday junction).. In terms of biological role, the RuvA-RuvB-RuvC complex processes Holliday junction (HJ) DNA during genetic recombination and DNA repair. Endonuclease that resolves HJ intermediates. Cleaves cruciform DNA by making single-stranded nicks across the HJ at symmetrical positions within the homologous arms, yielding a 5'-phosphate and a 3'-hydroxyl group; requires a central core of homology in the junction. The consensus cleavage sequence is 5'-(A/T)TT(C/G)-3'. Cleavage occurs on the 3'-side of the TT dinucleotide at the point of strand exchange. HJ branch migration catalyzed by RuvA-RuvB allows RuvC to scan DNA until it finds its consensus sequence, where it cleaves and resolves the cruciform DNA. The sequence is that of Crossover junction endodeoxyribonuclease RuvC from Ruminiclostridium cellulolyticum (strain ATCC 35319 / DSM 5812 / JCM 6584 / H10) (Clostridium cellulolyticum).